Consider the following 94-residue polypeptide: Co-chaperonin GroES (94 aa).

This sequence belongs to the GroES chaperonin family. As to quaternary structure, heptamer of 7 subunits arranged in a ring. Interacts with the chaperonin GroEL.

The protein resides in the cytoplasm. Functionally, together with the chaperonin GroEL, plays an essential role in assisting protein folding. The GroEL-GroES system forms a nano-cage that allows encapsulation of the non-native substrate proteins and provides a physical environment optimized to promote and accelerate protein folding. GroES binds to the apical surface of the GroEL ring, thereby capping the opening of the GroEL channel. This is Co-chaperonin GroES from Ehrlichia chaffeensis.